The chain runs to 603 residues: Serine protease 56 (603 aa).

An N-terminal signal peptide occupies residues 1–19 (MLLAVLLLLPLPSSWFAHG). Residues 64 to 96 (SHECRGSGRPRPQALLQDPPEPGPCGERRPSTA) are disordered. The N-linked (GlcNAc...) asparagine glycan is linked to Asn-97. One can recognise a Peptidase S1 domain in the interval 105–337 (IVGGSAAPPG…FKDWLQEQMS (233 aa)). Cys-130 and Cys-146 are joined by a disulfide. Active-site charge relay system residues include His-145 and Asp-191. Cystine bridges form between Cys-225–Cys-292, Cys-256–Cys-271, and Cys-282–Cys-313. Catalysis depends on Ser-286, which acts as the Charge relay system. Disordered stretches follow at residues 442 to 474 (PARE…NGCP) and 573 to 603 (EGPW…ARQP).

Belongs to the peptidase S1 family. As to expression, expressed neural retina, cornea, sclera and optic nerve.

In terms of biological role, serine protease required during eye development. The polypeptide is Serine protease 56 (PRSS56) (Homo sapiens (Human)).